A 356-amino-acid chain; its full sequence is Probable D-xylulose reductase A (356 aa).

3 residues coordinate Zn(2+): Cys-45, His-70, and Glu-71. 180–185 (GAGPVG) contacts NAD(+).

Belongs to the zinc-containing alcohol dehydrogenase family. Zn(2+) is required as a cofactor.

The enzyme catalyses xylitol + NAD(+) = D-xylulose + NADH + H(+). It functions in the pathway carbohydrate degradation; L-arabinose degradation via L-arabinitol; D-xylulose 5-phosphate from L-arabinose (fungal route): step 4/5. In terms of biological role, xylitol dehydrogenase which catalyzes the conversion of xylitol to D-xylulose. Xylose is a major component of hemicelluloses such as xylan. Most fungi utilize D-xylose via three enzymatic reactions, xylose reductase (XR), xylitol dehydrogenase (XDH), and xylulokinase, to form xylulose 5-phosphate, which enters pentose phosphate pathway. This is Probable D-xylulose reductase A (xdhA) from Arthroderma otae (strain ATCC MYA-4605 / CBS 113480) (Microsporum canis).